The following is a 50-amino-acid chain: Sperm protamine P1 (50 aa).

The protein belongs to the protamine P1 family. As to quaternary structure, cross-linked by interchain disulfide bonds around the DNA-helix. Testis.

The protein resides in the nucleus. The protein localises to the chromosome. Protamines substitute for histones in the chromatin of sperm during the haploid phase of spermatogenesis. They compact sperm DNA into a highly condensed, stable and inactive complex. In Saguinus imperator (Emperor tamarin), this protein is Sperm protamine P1 (PRM1).